The sequence spans 370 residues: Putative agmatine deiminase (370 aa).

Over residues 1-19 (MTNMNVDATQLTTKPSQDG) the composition is skewed to polar residues. The segment at 1–20 (MTNMNVDATQLTTKPSQDGF) is disordered. Catalysis depends on cysteine 361, which acts as the Amidino-cysteine intermediate.

It belongs to the agmatine deiminase family.

It carries out the reaction agmatine + H2O = N-carbamoylputrescine + NH4(+). In Shewanella frigidimarina (strain NCIMB 400), this protein is Putative agmatine deiminase.